We begin with the raw amino-acid sequence, 79 residues long: Sec-independent protein translocase protein TatA (79 aa).

A helical transmembrane segment spans residues 1–21 (MGSLSIWHWIVVIAVVLLLFG). A compositionally biased stretch (basic and acidic residues) spans 42–60 (GLQDDEKTAEKPDAVKSLD). The interval 42–79 (GLQDDEKTAEKPDAVKSLDHNATTGTPPNRTDVGSKAV) is disordered. Residues 61-70 (HNATTGTPPN) show a composition bias toward polar residues.

It belongs to the TatA/E family. The Tat system comprises two distinct complexes: a TatABC complex, containing multiple copies of TatA, TatB and TatC subunits, and a separate TatA complex, containing only TatA subunits. Substrates initially bind to the TatABC complex, which probably triggers association of the separate TatA complex to form the active translocon.

Its subcellular location is the cell inner membrane. Functionally, part of the twin-arginine translocation (Tat) system that transports large folded proteins containing a characteristic twin-arginine motif in their signal peptide across membranes. TatA could form the protein-conducting channel of the Tat system. This is Sec-independent protein translocase protein TatA from Rhodopseudomonas palustris (strain HaA2).